The following is a 186-amino-acid chain: Acireductone dioxygenase (186 aa).

His-89, His-91, Glu-95, and His-134 together coordinate Fe(2+). Residues His-89, His-91, Glu-95, and His-134 each coordinate Ni(2+).

Belongs to the acireductone dioxygenase (ARD) family. Requires Fe(2+) as cofactor. Ni(2+) serves as cofactor.

The protein localises to the cytoplasm. It localises to the nucleus. It catalyses the reaction 1,2-dihydroxy-5-(methylsulfanyl)pent-1-en-3-one + O2 = 4-methylsulfanyl-2-oxobutanoate + formate + 2 H(+). The enzyme catalyses 1,2-dihydroxy-5-(methylsulfanyl)pent-1-en-3-one + O2 = 3-(methylsulfanyl)propanoate + CO + formate + 2 H(+). The protein operates within amino-acid biosynthesis; L-methionine biosynthesis via salvage pathway; L-methionine from S-methyl-5-thio-alpha-D-ribose 1-phosphate: step 5/6. In terms of biological role, catalyzes 2 different reactions between oxygen and the acireductone 1,2-dihydroxy-3-keto-5-methylthiopentene (DHK-MTPene) depending upon the metal bound in the active site. Fe-containing acireductone dioxygenase (Fe-ARD) produces formate and 2-keto-4-methylthiobutyrate (KMTB), the alpha-ketoacid precursor of methionine in the methionine recycle pathway. Ni-containing acireductone dioxygenase (Ni-ARD) produces methylthiopropionate, carbon monoxide and formate, and does not lie on the methionine recycle pathway. The chain is Acireductone dioxygenase from Drosophila melanogaster (Fruit fly).